The following is a 137-amino-acid chain: Small ribosomal subunit protein uS12 (137 aa).

Residues 1–23 (MPTINQLVRKGRKSKSSKSDAPA) form a disordered region. The residue at position 102 (D102) is a 3-methylthioaspartic acid.

Belongs to the universal ribosomal protein uS12 family. In terms of assembly, part of the 30S ribosomal subunit. Contacts proteins S8 and S17. May interact with IF1 in the 30S initiation complex.

Functionally, with S4 and S5 plays an important role in translational accuracy. Interacts with and stabilizes bases of the 16S rRNA that are involved in tRNA selection in the A site and with the mRNA backbone. Located at the interface of the 30S and 50S subunits, it traverses the body of the 30S subunit contacting proteins on the other side and probably holding the rRNA structure together. The combined cluster of proteins S8, S12 and S17 appears to hold together the shoulder and platform of the 30S subunit. The protein is Small ribosomal subunit protein uS12 of Levilactobacillus brevis (strain ATCC 367 / BCRC 12310 / CIP 105137 / JCM 1170 / LMG 11437 / NCIMB 947 / NCTC 947) (Lactobacillus brevis).